A 323-amino-acid chain; its full sequence is tRNA dimethylallyltransferase (323 aa).

13-20 (GPTASGKT) provides a ligand contact to ATP. 15 to 20 (TASGKT) provides a ligand contact to substrate. Interaction with substrate tRNA regions lie at residues 42 to 45 (DSAL), 166 to 170 (QRIQR), 251 to 256 (RCVGYR), and 284 to 291 (KRQITWLR).

It belongs to the IPP transferase family. As to quaternary structure, monomer. It depends on Mg(2+) as a cofactor.

The enzyme catalyses adenosine(37) in tRNA + dimethylallyl diphosphate = N(6)-dimethylallyladenosine(37) in tRNA + diphosphate. In terms of biological role, catalyzes the transfer of a dimethylallyl group onto the adenine at position 37 in tRNAs that read codons beginning with uridine, leading to the formation of N6-(dimethylallyl)adenosine (i(6)A). This chain is tRNA dimethylallyltransferase, found in Acidovorax ebreus (strain TPSY) (Diaphorobacter sp. (strain TPSY)).